We begin with the raw amino-acid sequence, 429 residues long: MYIEIIDIYAREVLDSRGNPTVEVEVMLEDGSVGRAIVPSGASTGKFEALELRDKDSKRYGGKGVLKAIENVNEKIAPKLLGLNAYEQVSIDKTLLEIDGTENKSNIGANAILGVSMAVSRAVANSLQLPLYKYLGGVNAKVLPVPLMNVINGGAHADNNLDIQEFMIVPAGAPSFREALRYGAETFHALKRILKEAGHVTAVGDEGGFAPNLQNNEEAIQVLIRAIEKAGYVPGKDIYIALDVAASEFYNGETGKYFIDGTEKTSDELIEYYESLINKYPIISIEDPFDQEDWDSYRKFNEKVGKKVQIVGDDLYVTNVKRLEKGIELKATNSILIKLNQIGSVTETLNAIELAKTNNMTNVISHRSGETEDTFIADLAVATNAGQIKTGSLSRSERIAKYNQLLRIEEELGDAAEYKGIKAFYSIDR.

Gln164 is a (2R)-2-phosphoglycerate binding site. The Proton donor role is filled by Glu206. Positions 243, 286, and 313 each coordinate Mg(2+). (2R)-2-phosphoglycerate contacts are provided by Lys338, Arg367, Ser368, and Lys389. Lys338 functions as the Proton acceptor in the catalytic mechanism.

Belongs to the enolase family. Mg(2+) is required as a cofactor.

It localises to the cytoplasm. The protein resides in the secreted. The protein localises to the cell surface. The enzyme catalyses (2R)-2-phosphoglycerate = phosphoenolpyruvate + H2O. Its pathway is carbohydrate degradation; glycolysis; pyruvate from D-glyceraldehyde 3-phosphate: step 4/5. Catalyzes the reversible conversion of 2-phosphoglycerate (2-PG) into phosphoenolpyruvate (PEP). It is essential for the degradation of carbohydrates via glycolysis. This chain is Enolase, found in Thermosipho melanesiensis (strain DSM 12029 / CIP 104789 / BI429).